Here is a 214-residue protein sequence, read N- to C-terminus: Adenylate kinase (214 aa).

10–15 (GAGKGT) is a binding site for ATP. The interval 30-59 (STGDMLRAAVKAGTELGKQAKEIMDAGKLV) is NMP. AMP-binding positions include T31, R36, 57-59 (KLV), 85-88 (GFPR), and Q92. Residues 122-159 (GRRVHAASGRVYHVKFNPPKVEGKDDVTGEDLTIRKDD) form an LID region. ATP contacts are provided by residues R123 and 132–133 (VY). The AMP site is built by R156 and R167. Residue R200 participates in ATP binding.

The protein belongs to the adenylate kinase family. Monomer.

The protein resides in the cytoplasm. The enzyme catalyses AMP + ATP = 2 ADP. It functions in the pathway purine metabolism; AMP biosynthesis via salvage pathway; AMP from ADP: step 1/1. Its function is as follows. Catalyzes the reversible transfer of the terminal phosphate group between ATP and AMP. Plays an important role in cellular energy homeostasis and in adenine nucleotide metabolism. In Pectobacterium carotovorum subsp. carotovorum (strain PC1), this protein is Adenylate kinase.